Consider the following 188-residue polypeptide: Elongation factor P (188 aa).

It belongs to the elongation factor P family.

The protein resides in the cytoplasm. It participates in protein biosynthesis; polypeptide chain elongation. Functionally, involved in peptide bond synthesis. Stimulates efficient translation and peptide-bond synthesis on native or reconstituted 70S ribosomes in vitro. Probably functions indirectly by altering the affinity of the ribosome for aminoacyl-tRNA, thus increasing their reactivity as acceptors for peptidyl transferase. This is Elongation factor P from Methylobacterium radiotolerans (strain ATCC 27329 / DSM 1819 / JCM 2831 / NBRC 15690 / NCIMB 10815 / 0-1).